Reading from the N-terminus, the 136-residue chain is Transcription antitermination protein NusB (136 aa).

Belongs to the NusB family.

Its function is as follows. Involved in transcription antitermination. Required for transcription of ribosomal RNA (rRNA) genes. Binds specifically to the boxA antiterminator sequence of the ribosomal RNA (rrn) operons. The protein is Transcription antitermination protein NusB of Treponema denticola (strain ATCC 35405 / DSM 14222 / CIP 103919 / JCM 8153 / KCTC 15104).